The following is a 64-amino-acid chain: Large ribosomal subunit protein bL33 (64 aa).

Belongs to the bacterial ribosomal protein bL33 family.

The sequence is that of Large ribosomal subunit protein bL33 from Synechococcus sp. (strain JA-2-3B'a(2-13)) (Cyanobacteria bacterium Yellowstone B-Prime).